The primary structure comprises 151 residues: tRNA-specific adenosine deaminase (151 aa).

The 111-residue stretch at 1-111 folds into the CMP/dCMP-type deaminase domain; sequence MGKEYFLKVA…LDKKHGGVVS (111 aa). Residue histidine 52 coordinates Zn(2+). The active-site Proton donor is the glutamate 54. Zn(2+) contacts are provided by cysteine 82 and cysteine 85.

It belongs to the cytidine and deoxycytidylate deaminase family. As to quaternary structure, homodimer. It depends on Zn(2+) as a cofactor.

The catalysed reaction is adenosine(34) in tRNA + H2O + H(+) = inosine(34) in tRNA + NH4(+). Catalyzes the deamination of adenosine to inosine at the wobble position 34 of tRNA(Arg2). This chain is tRNA-specific adenosine deaminase, found in Aquifex aeolicus (strain VF5).